Consider the following 413-residue polypeptide: Protein trichome birefringence-like 9 (413 aa).

The chain crosses the membrane as a helical; Signal-anchor for type II membrane protein span at residues 22-42; sequence LFVSLFLLSLLIFSTVVVDVM. The GDS motif signature appears at 141-143; sequence GDS. Residues 384–398 carry the DCXHWCLPGXXDXWN motif motif; it reads DCSHWCLPGVPDTWN.

This sequence belongs to the PC-esterase family. TBL subfamily.

It localises to the membrane. In terms of biological role, may act as a bridging protein that binds pectin and other cell wall polysaccharides. Probably involved in maintaining esterification of pectins. May be involved in the specific O-acetylation of cell wall polymers. The chain is Protein trichome birefringence-like 9 (TBL9) from Arabidopsis thaliana (Mouse-ear cress).